An 863-amino-acid chain; its full sequence is MICAL-like protein 1 (863 aa).

The region spanning 2-108 is the Calponin-homology (CH) domain; sequence AGPRGALLAW…YVSQYYNHFC (107 aa). Disordered regions lie at residues 119-162 and 224-670; these read RKGL…TPSS and GTRS…PLIK. The span at 125–135 shows a compositional bias: pro residues; it reads CSPPSVAPTPV. Low complexity-rich tracts occupy residues 143–159 and 224–244; these read GEEL…TGQT and GTRS…HQQQ. In terms of domain architecture, LIM zinc-binding spans 162–225; that stretch reads STCAACQQHV…EHCARLGPGT (64 aa). Phosphoserine is present on residues S295 and S309. T318 carries the phosphothreonine modification. Positions 325–340 are enriched in polar residues; it reads LQQENLVEQAGSSSLV. A compositionally biased stretch (pro residues) spans 384–395; the sequence is APLPPSSSPGPP. Phosphoserine is present on S391. The NPF1 signature appears at 425 to 427; that stretch reads NPF. The segment covering 427–438 has biased composition (acidic residues); sequence FEEEEEDKEEEA. Low complexity predominate over residues 439–450; it reads PAAPSLATSPAL. Phosphothreonine is present on residues T467 and T469. A phosphoserine mark is found at S470, S471, S484, and S486. Composition is skewed to low complexity over residues 482 to 495, 505 to 520, and 553 to 566; these read APSA…ASRL, PSPA…ESAS, and SLST…SGEL. A phosphoserine mark is found at S578 and S621. The NPF2 signature appears at 633-635; that stretch reads NPF. Low complexity predominate over residues 638–656; sequence KPSPAASPATKKATKGSKP. Positions 652 to 863 are mediates the interaction with RAB13 and RAB35 and intramolecular interaction with the CH domain; it reads KGSKPVRPPA…AKSKSPRDKS (212 aa). The 148-residue stretch at 671-818 folds into the bMERB domain; it reads RKVQADQYIP…EEEEDKMLEA (148 aa). A coiled-coil region spans residues 682 to 711; that stretch reads EDIHGEMDTIERRLDALEHRGVLLEEKLRG. Residues 700–863 form a necessary and sufficient to associate with tubular recycling endosome membranes, mediate phosphatidic acid-binding and membrane tubulation region; that stretch reads HRGVLLEEKL…AKSKSPRDKS (164 aa). S740 carries the post-translational modification Phosphoserine. The stretch at 785 to 830 forms a coiled coil; sequence MQELVTLIEQRNAIINCLDEDRQREEEEDKMLEAMIKKKEFQREAE.

As to quaternary structure, homooligomer. Interacts (via NPF1 motif) with EHD1 (via EH domain); the interaction is direct and probably recruits EHD1 to membranes. Interacts with EHD3 (via EH domain). Interacts with RAB35 (GTP-bound form); the interaction is direct and probably recruits MICALL1 to membranes. Interacts with ACAP2; the interaction is indirect through RAB35. Interacts with RAB8A (GTP-bound form); regulates RAB8A association with recycling endosomes. Interacts with RAB13 (GTP-bound form). Interacts with ARF6 (GTP-bound form). Interacts with PACSIN2 (via the SH3 domain). Interacts with DPYSL2.

The protein localises to the recycling endosome membrane. The protein resides in the late endosome membrane. It localises to the cell projection. It is found in the cilium membrane. Its subcellular location is the cytoplasm. The protein localises to the cytoskeleton. The protein resides in the microtubule organizing center. It localises to the centrosome. It is found in the centriole. Lipid-binding protein with higher affinity for phosphatidic acid, a lipid enriched in recycling endosome membranes. On endosome membranes, acts as a downstream effector of Rab proteins recruiting cytosolic proteins to regulate membrane tubulation. Involved in a late step of receptor-mediated endocytosis regulating for instance endocytosed-EGF receptor trafficking. Alternatively, regulates slow endocytic recycling of endocytosed proteins back to the plasma membrane. Also involved in cargo protein delivery to the plasma membrane. Plays a role in ciliogenesis coordination, recruits EHD1 to primary cilium where it is anchored to the centriole through interaction with tubulins. May indirectly play a role in neurite outgrowth. The polypeptide is MICAL-like protein 1 (MICALL1) (Homo sapiens (Human)).